Consider the following 207-residue polypeptide: Cytochrome c biogenesis ATP-binding export protein CcmA 1 (207 aa).

The region spanning 6 to 207 (LEALDLAGVR…KTSQTVRMGA (202 aa)) is the ABC transporter domain. 38–45 (GENGSGKT) contacts ATP.

Belongs to the ABC transporter superfamily. CcmA exporter (TC 3.A.1.107) family. In terms of assembly, the complex is composed of two ATP-binding proteins (CcmA) and two transmembrane proteins (CcmB).

The protein localises to the cell inner membrane. It carries out the reaction heme b(in) + ATP + H2O = heme b(out) + ADP + phosphate + H(+). Part of the ABC transporter complex CcmAB involved in the biogenesis of c-type cytochromes; once thought to export heme, this seems not to be the case, but its exact role is uncertain. Responsible for energy coupling to the transport system. In Cupriavidus metallidurans (strain ATCC 43123 / DSM 2839 / NBRC 102507 / CH34) (Ralstonia metallidurans), this protein is Cytochrome c biogenesis ATP-binding export protein CcmA 1.